Reading from the N-terminus, the 1221-residue chain is DNA-directed RNA polymerase subunit beta (1221 aa).

Positions 1176–1221 are disordered; it reads EKKKLAEEEAEIAAEAEAEGSAEGDAAEADADANEAETADDDKASK. Residues 1183–1215 show a composition bias toward acidic residues; that stretch reads EEAEIAAEAEAEGSAEGDAAEADADANEAETAD.

The protein belongs to the RNA polymerase beta chain family. In terms of assembly, the RNAP catalytic core consists of 2 alpha, 1 beta, 1 beta' and 1 omega subunit. When a sigma factor is associated with the core the holoenzyme is formed, which can initiate transcription.

The enzyme catalyses RNA(n) + a ribonucleoside 5'-triphosphate = RNA(n+1) + diphosphate. DNA-dependent RNA polymerase catalyzes the transcription of DNA into RNA using the four ribonucleoside triphosphates as substrates. In Lactobacillus delbrueckii subsp. bulgaricus (strain ATCC 11842 / DSM 20081 / BCRC 10696 / JCM 1002 / NBRC 13953 / NCIMB 11778 / NCTC 12712 / WDCM 00102 / Lb 14), this protein is DNA-directed RNA polymerase subunit beta.